We begin with the raw amino-acid sequence, 300 residues long: Elongator complex protein 5 (300 aa).

S252 is subject to Phosphoserine. The interval 264–300 (QQALLRPRPGQATSHIFYEPDAYDDLDQEDPDDDLDI) is disordered. Positions 284 to 300 (DAYDDLDQEDPDDDLDI) are enriched in acidic residues.

The protein belongs to the ELP5 family. In terms of assembly, component of the elongator complex which consists of ELP1, ELP2, ELP3, ELP4, ELP5 and ELP6; in the complex, is required for optimal binding of ELP3 to ELP4. Tyrosine-phosphorylated. In terms of tissue distribution, ubiquitously expressed with high levels in heart, brain, liver, skeletal muscle and testis.

The protein resides in the nucleus. It localises to the cytoplasm. It participates in tRNA modification; 5-methoxycarbonylmethyl-2-thiouridine-tRNA biosynthesis. In terms of biological role, component of the elongator complex which is required for multiple tRNA modifications, including mcm5U (5-methoxycarbonylmethyl uridine), mcm5s2U (5-methoxycarbonylmethyl-2-thiouridine), and ncm5U (5-carbamoylmethyl uridine). The elongator complex catalyzes formation of carboxymethyluridine in the wobble base at position 34 in tRNAs. Involved in cell migration. This Homo sapiens (Human) protein is Elongator complex protein 5.